The sequence spans 355 residues: Sorbitol dehydrogenase (355 aa).

At Ala-2 the chain carries N-acetylalanine. Cys-43 lines the Zn(2+) pocket. Residue Tyr-49 participates in substrate binding. Zn(2+)-binding residues include His-68 and Glu-69. A substrate-binding site is contributed by Glu-154. Residues Ile-182, Asp-202, Arg-207, 271–273 (VGL), and 295–297 (IFR) each bind NAD(+). The substrate site is built by Arg-297 and Tyr-298.

It belongs to the zinc-containing alcohol dehydrogenase family. In terms of assembly, homotetramer. It depends on Zn(2+) as a cofactor. As to expression, expressed in liver.

The protein localises to the mitochondrion membrane. It localises to the cell projection. The protein resides in the cilium. Its subcellular location is the flagellum. The catalysed reaction is keto-D-fructose + NADH + H(+) = D-sorbitol + NAD(+). Polyol dehydrogenase that catalyzes the reversible NAD(+)-dependent oxidation of various sugar alcohols. Is active with D-sorbitol (D-glucitol) as substrate, leading to the C2-oxidized product D-fructose. Is a key enzyme in the polyol pathway that interconverts glucose and fructose via sorbitol, which constitutes an important alternate route for glucose metabolism. In Gallus gallus (Chicken), this protein is Sorbitol dehydrogenase (SORD).